We begin with the raw amino-acid sequence, 977 residues long: Alanine--tRNA ligase (977 aa).

Residues 512 to 535 (SQVDSKLQSSTPAGTGSYDSKQVS) are disordered. Zn(2+) is bound by residues His618, His622, Cys720, and His724.

It belongs to the class-II aminoacyl-tRNA synthetase family. It depends on Zn(2+) as a cofactor.

It is found in the cytoplasm. The enzyme catalyses tRNA(Ala) + L-alanine + ATP = L-alanyl-tRNA(Ala) + AMP + diphosphate. Its function is as follows. Catalyzes the attachment of alanine to tRNA(Ala) in a two-step reaction: alanine is first activated by ATP to form Ala-AMP and then transferred to the acceptor end of tRNA(Ala). Also edits incorrectly charged Ser-tRNA(Ala) and Gly-tRNA(Ala) via its editing domain. This Leptospira interrogans serogroup Icterohaemorrhagiae serovar copenhageni (strain Fiocruz L1-130) protein is Alanine--tRNA ligase.